We begin with the raw amino-acid sequence, 605 residues long: Progranulin (605 aa).

The signal sequence occupies residues 1–17 (MWTLVGWTILVAGLVAG). 2 cysteine pairs are disulfide-bonded: cysteine 126–cysteine 139 and cysteine 133–cysteine 149. N-linked (GlcNAc...) asparagine glycosylation occurs at asparagine 197. 6 disulfide bridges follow: cysteine 297-cysteine 309, cysteine 303-cysteine 319, cysteine 310-cysteine 327, cysteine 320-cysteine 334, cysteine 328-cysteine 341, and cysteine 335-cysteine 348. Positions 359–386 (QKTPAQPSRPSQPSPPGPPGPPSPPGPL) are disordered. The segment covering 368–385 (PSQPSPPGPPGPPSPPGP) has biased composition (pro residues). Intrachain disulfides connect cysteine 392–cysteine 404 and cysteine 398–cysteine 414.

Belongs to the granulin family. Progranulin is secreted as a homodimer. Interacts with SLPI; interaction protects progranulin from proteolysis. Interacts (via region corresponding to granulin-7 peptide) with CTSD; stabilizes CTSD and increases its proteolytic activity. Interacts (via region corresponding to granulin-7 peptide) with SORT1; this interaction mediates endocytosis and lysosome delivery of progranulin; interaction occurs at the neuronal cell surface in a stressed nervous system. Interacts with PSAP; facilitates lysosomal delivery of progranulin from the extracellular space and the biosynthetic pathway. Forms a complex with PSAP and M6PR; PSAP bridges the binding between progranulin and M6PR. Forms a complex with PSAP and SORT1; progranulin bridges the interaction between PSAP and SORT1; facilitates lysosomal targeting of PSAP via SORT1; interaction enhances PSAP uptake in primary cortical neurons. Interacts (via regions corresponding to granulin-2 and granulin-7 peptides) with GBA1; this interaction prevents aggregation of GBA1-SCARB2 complex via interaction with HSPA1A upon stress. Interacts (via region corresponding to granulin-7 peptide) with HSPA1A; mediates recruitment of HSPA1A to GBA1 and prevents GBA1 aggregation in response to stress. Cleaved by ELANE; proteolysis is blocked by SLPI and is concentration- and time-dependent and induces CXCL8/IL-8 production; granulin-3 and granulin-4 are resistant to ELANE. Cleaved by CTSL in lysosome thus regulating the maturation and turnover of progranulin within the lysosome.

The protein resides in the secreted. It is found in the lysosome. Its function is as follows. Secreted protein that acts as a key regulator of lysosomal function and as a growth factor involved in inflammation, wound healing and cell proliferation. Regulates protein trafficking to lysosomes, and also the activity of lysosomal enzymes. Also facilitates the acidification of lysosomes, causing degradation of mature CTSD by CTSB. In addition, functions as a wound-related growth factor that acts directly on dermal fibroblasts and endothelial cells to promote division, migration and the formation of capillary-like tubule structures. Also promotes epithelial cell proliferation by blocking TNF-mediated neutrophil activation preventing release of oxidants and proteases. Moreover, modulates inflammation in neurons by preserving neurons survival, axonal outgrowth and neuronal integrity. In terms of biological role, inhibits epithelial cell proliferation and induces epithelial cells to secrete IL-8. Stabilizes CTSD through interaction with CTSD leading to maintain its aspartic-type peptidase activity. The sequence is that of Progranulin (GRN) from Cavia porcellus (Guinea pig).